Reading from the N-terminus, the 191-residue chain is Protein Ves (191 aa).

This sequence belongs to the Ves family.

This chain is Protein Ves, found in Shigella boydii serotype 18 (strain CDC 3083-94 / BS512).